A 293-amino-acid chain; its full sequence is Inhibitory synaptic factor 1 (293 aa).

Positions 1 to 26 (MNIRGAPDLGQPSDDPSSGGERERIR) are disordered. A coiled-coil region spans residues 30–63 (KMVIGQLEGILRELKEVAKELREVVSQIDKLTSD). 2 disordered regions span residues 120–186 (TPSD…RERV) and 200–293 (DDEE…RGKN). Over residues 171–180 (VKSQLPQRTP) the composition is skewed to polar residues. Over residues 200–215 (DDEEGDGEQEVEEEEV) the composition is skewed to acidic residues. Composition is skewed to polar residues over residues 243 to 256 (SPLTSRHSGSTLAP) and 264 to 286 (RNSSTQTVSDKSTQTVLPYTATR).

Belongs to the INSYN1 family. As to quaternary structure, interacts with GPHN.

Its subcellular location is the postsynaptic density. Its function is as follows. Component of the protein machinery at the inhibitory synapses, probably acting as a scaffold. Inhibitory synapses dampen neuronal activity through postsynaptic hyperpolarization. This synaptic inhibition is fundamental for the functioning of the central nervous system, shaping and orchestrating the flow of information through neuronal networks to generate a precise neural code. In Homo sapiens (Human), this protein is Inhibitory synaptic factor 1.